Reading from the N-terminus, the 129-residue chain is Small ribosomal subunit protein uS11 (129 aa).

This sequence belongs to the universal ribosomal protein uS11 family. Part of the 30S ribosomal subunit. Interacts with proteins S7 and S18. Binds to IF-3.

In terms of biological role, located on the platform of the 30S subunit, it bridges several disparate RNA helices of the 16S rRNA. Forms part of the Shine-Dalgarno cleft in the 70S ribosome. The polypeptide is Small ribosomal subunit protein uS11 (Haemophilus influenzae (strain 86-028NP)).